Here is a 156-residue protein sequence, read N- to C-terminus: Cytochrome c-type biogenesis protein CcmE 2 (156 aa).

The Cytoplasmic portion of the chain corresponds to 1–8; sequence MNPQRRRR. A helical; Signal-anchor for type II membrane protein membrane pass occupies residues 9–29; it reads LWWVLALLLAGGLATTLVSMA. Residues 30-156 are Periplasmic-facing; sequence LQRNVAYLYT…AAANQGGALR (127 aa). Residues His-123 and Tyr-127 each contribute to the heme site. The segment at 135–156 is disordered; sequence KMGSAHRKHDVPAAANQGGALR.

Belongs to the CcmE/CycJ family.

The protein localises to the cell inner membrane. Heme chaperone required for the biogenesis of c-type cytochromes. Transiently binds heme delivered by CcmC and transfers the heme to apo-cytochromes in a process facilitated by CcmF and CcmH. In Xanthomonas oryzae pv. oryzae (strain MAFF 311018), this protein is Cytochrome c-type biogenesis protein CcmE 2.